Consider the following 412-residue polypeptide: Burnettramic acids biosynthesis cluster protein E (412 aa).

3 disordered regions span residues 1 to 66 (MAIA…KKIR), 308 to 342 (RNPT…SLAT), and 386 to 412 (SRAE…AAKG). Over residues 36 to 58 (EDEQWALDELQDELCQEEPSDSE) the composition is skewed to acidic residues. Over residues 395–404 (EATTEPSVQS) the composition is skewed to polar residues.

The protein operates within mycotoxin biosynthesis. Its function is as follows. Part of the gene cluster that mediates the biosynthesis of burnettramic acids, an unusual class of bolaamphiphilic pyrrolizidinediones that display potent antibacterial, antifungal, and cytotoxic activities. The first step of the biosynthesis of burnettramic acids is the hydroxylation of proline by the proline hydroxylase buaE to generate 4-hydroxyproline. The PKS-NRPS buaA and trans-enoyl reductase buaC construct the highly reduced polyketide chain, and the condensation (C) domain of buaA then catalyzes the amide bond formation with the activated 4-hydroxyproline. This is followed by the R domain releasing the nascent polyketide-peptide directly via a Dieckmann condensation to afford a tetramic acid fused to the hydroxyproline, generating the bicyclic pyrrolidinedione moiety. The cytochrome P450 monooxygenases buaD and buaG are likely responsible for the multiple hydroxylations on the polyketide chain and its terminus, although in the heterologous context, buaD does not appear to be required. Therefore, while buaG may be a multifunctional cytochrome P450 monooxygenase, it cannot be ruled out that the two secondary alcohols on the polyketide chain could have an acetate origin. Finally, the glycosyltransferase buaB transfers beta-D-mannose to the aglycone burnettramic acid A to form burnettramic acid A. Burnettramic acid B is a minor cis-pyrrolizidine epimer of burnettramic acid A and it is likely that small amounts of it form naturally in acidic environments. The role of the uncharacterized protein buaF in the biosynthesis of burnettramic acids has still to be determined. The polypeptide is Burnettramic acids biosynthesis cluster protein E (Petromyces alliaceus (Aspergillus alliaceus)).